The sequence spans 456 residues: Bifunctional protein GlmU (456 aa).

The tract at residues 1–231 (MERTCLAIIL…EEELTGCNTR (231 aa)) is pyrophosphorylase. UDP-N-acetyl-alpha-D-glucosamine contacts are provided by residues 10–13 (LAAG), K24, Q77, and 82–83 (GT). D107 lines the Mg(2+) pocket. UDP-N-acetyl-alpha-D-glucosamine is bound by residues G143, E157, N172, and N229. Residue N229 participates in Mg(2+) binding. A linker region spans residues 232 to 252 (AELAYIERLWQQRRRQELMLA). Positions 253 to 456 (GVSMVAPETV…AARKKVKAAE (204 aa)) are N-acetyltransferase. UDP-N-acetyl-alpha-D-glucosamine-binding residues include R318 and K336. H348 functions as the Proton acceptor in the catalytic mechanism. UDP-N-acetyl-alpha-D-glucosamine contacts are provided by Y351 and N362. Residues A365, 371 to 372 (NY), S390, S408, and R425 contribute to the acetyl-CoA site.

It in the N-terminal section; belongs to the N-acetylglucosamine-1-phosphate uridyltransferase family. The protein in the C-terminal section; belongs to the transferase hexapeptide repeat family. In terms of assembly, homotrimer. Mg(2+) serves as cofactor.

The protein resides in the cytoplasm. It catalyses the reaction alpha-D-glucosamine 1-phosphate + acetyl-CoA = N-acetyl-alpha-D-glucosamine 1-phosphate + CoA + H(+). It carries out the reaction N-acetyl-alpha-D-glucosamine 1-phosphate + UTP + H(+) = UDP-N-acetyl-alpha-D-glucosamine + diphosphate. The protein operates within nucleotide-sugar biosynthesis; UDP-N-acetyl-alpha-D-glucosamine biosynthesis; N-acetyl-alpha-D-glucosamine 1-phosphate from alpha-D-glucosamine 6-phosphate (route II): step 2/2. Its pathway is nucleotide-sugar biosynthesis; UDP-N-acetyl-alpha-D-glucosamine biosynthesis; UDP-N-acetyl-alpha-D-glucosamine from N-acetyl-alpha-D-glucosamine 1-phosphate: step 1/1. It functions in the pathway bacterial outer membrane biogenesis; LPS lipid A biosynthesis. Functionally, catalyzes the last two sequential reactions in the de novo biosynthetic pathway for UDP-N-acetylglucosamine (UDP-GlcNAc). The C-terminal domain catalyzes the transfer of acetyl group from acetyl coenzyme A to glucosamine-1-phosphate (GlcN-1-P) to produce N-acetylglucosamine-1-phosphate (GlcNAc-1-P), which is converted into UDP-GlcNAc by the transfer of uridine 5-monophosphate (from uridine 5-triphosphate), a reaction catalyzed by the N-terminal domain. The protein is Bifunctional protein GlmU of Sinorhizobium fredii (strain NBRC 101917 / NGR234).